The sequence spans 166 residues: Large ribosomal subunit protein uL10 (166 aa).

It belongs to the universal ribosomal protein uL10 family. As to quaternary structure, part of the ribosomal stalk of the 50S ribosomal subunit. The N-terminus interacts with L11 and the large rRNA to form the base of the stalk. The C-terminus forms an elongated spine to which L12 dimers bind in a sequential fashion forming a multimeric L10(L12)X complex.

Functionally, forms part of the ribosomal stalk, playing a central role in the interaction of the ribosome with GTP-bound translation factors. The chain is Large ribosomal subunit protein uL10 from Lysinibacillus sphaericus (strain C3-41).